We begin with the raw amino-acid sequence, 377 residues long: Putative efflux system component YknX (377 aa).

The helical transmembrane segment at 3-23 (KVWIGIGIAVIVALFVGINIY) threads the bilayer. The stretch at 95–187 (TNEQLSLEKE…RVSDLEVKSE (93 aa)) forms a coiled coil.

This sequence belongs to the membrane fusion protein (MFP) (TC 8.A.1) family. In terms of assembly, part of a complex composed of YknX, YknY and YknZ. The complex interacts with YknW.

Its subcellular location is the cell membrane. Part of an unusual four-component transporter, which is required for protection against the killing factor SdpC (sporulation-delaying protein). This Bacillus subtilis (strain 168) protein is Putative efflux system component YknX (yknX).